Here is a 414-residue protein sequence, read N- to C-terminus: Serine hydroxymethyltransferase (414 aa).

Residues Leu-116 and 120–122 (GHL) each bind (6S)-5,6,7,8-tetrahydrofolate. Lys-224 is modified (N6-(pyridoxal phosphate)lysine). Residues Glu-240 and 348–350 (SPF) each bind (6S)-5,6,7,8-tetrahydrofolate.

It belongs to the SHMT family. In terms of assembly, homodimer. It depends on pyridoxal 5'-phosphate as a cofactor.

The protein localises to the cytoplasm. The enzyme catalyses (6R)-5,10-methylene-5,6,7,8-tetrahydrofolate + glycine + H2O = (6S)-5,6,7,8-tetrahydrofolate + L-serine. Its pathway is one-carbon metabolism; tetrahydrofolate interconversion. It functions in the pathway amino-acid biosynthesis; glycine biosynthesis; glycine from L-serine: step 1/1. Functionally, catalyzes the reversible interconversion of serine and glycine with tetrahydrofolate (THF) serving as the one-carbon carrier. This reaction serves as the major source of one-carbon groups required for the biosynthesis of purines, thymidylate, methionine, and other important biomolecules. Also exhibits THF-independent aldolase activity toward beta-hydroxyamino acids, producing glycine and aldehydes, via a retro-aldol mechanism. This chain is Serine hydroxymethyltransferase, found in Campylobacter fetus subsp. fetus (strain 82-40).